The chain runs to 336 residues: Protein-arginine kinase (336 aa).

The region spanning 22–245 (IVMSSRIRLA…QQIINEEMQI (224 aa)) is the Phosphagen kinase C-terminal domain. ATP-binding positions include 25 to 29 (SSRIR), His-83, Arg-116, 167 to 171 (RASVM), and 198 to 203 (RGIYGE).

It belongs to the ATP:guanido phosphotransferase family.

The enzyme catalyses L-arginyl-[protein] + ATP = N(omega)-phospho-L-arginyl-[protein] + ADP + H(+). Functionally, catalyzes the specific phosphorylation of arginine residues in proteins. The chain is Protein-arginine kinase from Staphylococcus saprophyticus subsp. saprophyticus (strain ATCC 15305 / DSM 20229 / NCIMB 8711 / NCTC 7292 / S-41).